The following is a 251-amino-acid chain: tRNA pseudouridine synthase A (251 aa).

The Nucleophile role is filled by aspartate 52. Tyrosine 113 is a substrate binding site.

This sequence belongs to the tRNA pseudouridine synthase TruA family. As to quaternary structure, homodimer.

It catalyses the reaction uridine(38/39/40) in tRNA = pseudouridine(38/39/40) in tRNA. In terms of biological role, formation of pseudouridine at positions 38, 39 and 40 in the anticodon stem and loop of transfer RNAs. This is tRNA pseudouridine synthase A from Brucella anthropi (strain ATCC 49188 / DSM 6882 / CCUG 24695 / JCM 21032 / LMG 3331 / NBRC 15819 / NCTC 12168 / Alc 37) (Ochrobactrum anthropi).